A 91-amino-acid polypeptide reads, in one-letter code: UPF0250 protein mma_3250 (91 aa).

This sequence belongs to the UPF0250 family.

This is UPF0250 protein mma_3250 from Janthinobacterium sp. (strain Marseille) (Minibacterium massiliensis).